A 251-amino-acid chain; its full sequence is uncharacterized protein (251 aa).

The next 7 helical transmembrane spans lie at 48–68 (WMVG…VELI), 88–108 (VLWG…LVAN), 110–130 (IPLL…FIWV), 132–152 (AMVW…GSSF), 158–178 (IGVS…GLFV), 184–204 (IIGC…MPVL), and 209–229 (GVSW…AYLL).

This sequence to M.tuberculosis Rv1337.

It is found in the cell membrane. This is an uncharacterized protein from Mycobacterium leprae (strain TN).